We begin with the raw amino-acid sequence, 182 residues long: Troponin I, fast skeletal muscle (182 aa).

Gly2 bears the N-acetylglycine mark. Positions 2-48 (GDEEKRNRAITARRQHLKSVMLQIAATELEKEESRRESEKQNYLSEH) are involved in binding TNC. Phosphothreonine is present on Thr12. The segment covering 29–41 (ELEKEESRRESEK) has biased composition (basic and acidic residues). Residues 29-53 (ELEKEESRRESEKQNYLSEHCPPLH) form a disordered region. Positions 97-117 (NQKLFDLRGKFKRPPLRRVRM) are involved in binding TNC and actin. Ser118 bears the Phosphoserine mark.

Belongs to the troponin I family. Binds to actin and tropomyosin.

Troponin I is the inhibitory subunit of troponin, the thin filament regulatory complex which confers calcium-sensitivity to striated muscle actomyosin ATPase activity. In Rattus norvegicus (Rat), this protein is Troponin I, fast skeletal muscle (Tnni2).